Consider the following 476-residue polypeptide: Glycogen synthase (476 aa).

An ADP-alpha-D-glucose-binding site is contributed by K15.

Belongs to the glycosyltransferase 1 family. Bacterial/plant glycogen synthase subfamily.

The catalysed reaction is [(1-&gt;4)-alpha-D-glucosyl](n) + ADP-alpha-D-glucose = [(1-&gt;4)-alpha-D-glucosyl](n+1) + ADP + H(+). Its pathway is glycan biosynthesis; glycogen biosynthesis. Its function is as follows. Synthesizes alpha-1,4-glucan chains using ADP-glucose. This Haemophilus influenzae (strain PittGG) protein is Glycogen synthase.